Here is a 713-residue protein sequence, read N- to C-terminus: Polyribonucleotide nucleotidyltransferase (713 aa).

Positions 488 and 494 each coordinate Mg(2+). Residues 555 to 614 (PRIEVMNIPTDKIRDVIGSGGKVIREIVEKTGAKINIEDDGTVKIASSNGKEIEAAKKWI) form the KH domain. The S1 motif domain occupies 624–692 (GEIYEGTVVK…ERGKVRLSMK (69 aa)).

The protein belongs to the polyribonucleotide nucleotidyltransferase family. The cofactor is Mg(2+).

The protein localises to the cytoplasm. It carries out the reaction RNA(n+1) + phosphate = RNA(n) + a ribonucleoside 5'-diphosphate. Involved in mRNA degradation. Catalyzes the phosphorolysis of single-stranded polyribonucleotides processively in the 3'- to 5'-direction. This is Polyribonucleotide nucleotidyltransferase from Brucella anthropi (strain ATCC 49188 / DSM 6882 / CCUG 24695 / JCM 21032 / LMG 3331 / NBRC 15819 / NCTC 12168 / Alc 37) (Ochrobactrum anthropi).